Reading from the N-terminus, the 130-residue chain is Small ribosomal subunit protein uS11 (130 aa).

This sequence belongs to the universal ribosomal protein uS11 family. As to quaternary structure, part of the 30S ribosomal subunit. Interacts with proteins S7 and S18. Binds to IF-3.

Its function is as follows. Located on the platform of the 30S subunit, it bridges several disparate RNA helices of the 16S rRNA. Forms part of the Shine-Dalgarno cleft in the 70S ribosome. The chain is Small ribosomal subunit protein uS11 from Campylobacter jejuni subsp. jejuni serotype O:6 (strain 81116 / NCTC 11828).